The following is a 1544-amino-acid chain: GATOR complex protein Iml1 (1544 aa).

Disordered regions lie at residues 615 to 649 (QAVP…CENG) and 1037 to 1072 (RRHS…EKRP). Composition is skewed to polar residues over residues 623–639 (QAGQ…NNNN) and 1041–1057 (TSII…TNSP). Residues 1058–1072 (FRERVGSNRLPEKRP) show a composition bias toward basic and acidic residues.

The protein belongs to the IML1 family. In terms of assembly, component of the GATOR complex consisting of mio, Nup44A/Seh1, Im11, Nplr3, Nplr2, Wdr24, Wdr59 and Sec13. Within the GATOR complex, probable component of the GATOR1 subcomplex which is likely composed of Iml1, Nplr2 and Nplr3.

Its function is as follows. An essential component of the GATOR subcomplex GATOR1 which functions as an inhibitor of the amino acid-sensing branch of the TORC1 signaling pathway. The two GATOR subcomplexes, GATOR1 and GATOR2, regulate the TORC1 pathway in order to mediate metabolic homeostasis, female gametogenesis and the response to amino acid limitation and complete starvation. The function of GATOR1 in negatively regulating the TORC1 pathway is essential for maintaining baseline levels of TORC1 activity under nutrient rich conditions, and for promoting survival during amino acid or complete starvation by inhibiting TORC1-dependent cell growth and promoting catabolic metabolism and autophagy. GATOR1 and GATOR2 act at different stages of oogenesis to regulate TORC1 in order to control meiotic entry and promote oocyte growth and development. After exactly four mitotic cyst divisions, the GATOR1 complex members (Iml1, Nprl2 and Nprl3) down-regulate TORC1 to slow cellular metabolism and promote the mitotic/meiotic transition. At later stages of oogenesis, the mio and Nup44A components of the GATOR2 complex inhibit GATOR1 and thus activate TORC1 to promote meiotic progression, and drive oocyte growth and development. The protein is GATOR complex protein Iml1 of Drosophila melanogaster (Fruit fly).